Here is a 576-residue protein sequence, read N- to C-terminus: Insulin-like growth factor 2 mRNA-binding protein 1 (576 aa).

RRM domains lie at 2–75 (NKLY…HSVP) and 81–156 (RKIQ…YIPD). The interval 158–189 (QSVQGPENGRRGGFGARGAPRQGSPVTAGAPV) is disordered. KH domains follow at residues 195 to 260 (DIPL…CKMI) and 276 to 343 (EVPL…EQEI). A Phosphotyrosine; by SRC modification is found at Tyr396. 2 KH domains span residues 404 to 469 (QETV…QGRI) and 486 to 552 (KLET…QRKI).

The protein belongs to the RRM IMP/VICKZ family. In terms of assembly, can form homooligomers and heterooligomers with IGF2BP1 and IGF2BP3 in an RNA-dependent manner. Associates with the cytoskeleton, predominantly with actin filament bundles and occasionally with microtubules. In a heterologous system, interacts with ELAVL1, DHX9 and HNRNPU. Post-translationally, phosphorylated by SRC at Tyr-396. This residue is involved in ACTB mRNA binding, its phosphorylation impairs association with ACTB mRNA and hence abolishes translational repression. Phosphorylation occurs in close proximity to filopodia and in the growth cones of differentiated neuroglioblastoma cells. Expressed in neurons and embryonic fibroblasts (at protein level).

The protein resides in the nucleus. The protein localises to the cytoplasm. It is found in the perinuclear region. It localises to the P-body. Its subcellular location is the stress granule. The protein resides in the cell projection. The protein localises to the growth cone. It is found in the filopodium. It localises to the lamellipodium. Its function is as follows. RNA-binding factor that recruits target transcripts to cytoplasmic protein-RNA complexes (mRNPs). This transcript 'caging' into mRNPs allows mRNA transport and transient storage. It also modulates the rate and location at which target transcripts encounter the translational apparatus and shields them from endonuclease attacks or microRNA-mediated degradation. Preferentially binds to N6-methyladenosine (m6A)-containing mRNAs and increases their stability. Plays a direct role in the transport and translation of transcripts required for axonal regeneration in adult sensory neurons. Regulates localized beta-actin/ACTB mRNA translation in polarized cells, a crucial process for cell migration and neurite outgrowth. Co-transcriptionally associates with the ACTB mRNA in the nucleus. This binding involves by a conserved 54-nucleotide element in the ACTB mRNA 3'-UTR, known as the 'zipcode'. The ribonucleoparticle (RNP) thus formed is exported to the cytoplasm, binds to a motor protein and is transported along the cytoskeleton to the cell periphery. During transport, IGF2BP1 prevents beta-actin mRNA from being translated into protein. When the RNP complex reaches its destination near the plasma membrane, IGF2BP1 is phosphorylated by SRC. This releases the mRNA, allowing ribosomal 40S and 60S subunits to assemble and initiate ACTB protein synthesis. The monomeric ACTB protein then assembles into the subcortical actin cytoskeleton, which pushes the leading edge onwards. Binds MYC mRNA. Binding to MYC mRNA is enhanced by m6A-modification of the CRD. Promotes the directed movement of cells by fine-tuning intracellular signaling networks. Binds to MAPK4 3'-UTR and inhibits its translation. Interacts with PTEN transcript open reading frame (ORF) and prevents mRNA decay. This combined action on MAPK4 (down-regulation) and PTEN (up-regulation) antagonizes HSPB1 phosphorylation, consequently it prevents G-actin sequestration by phosphorylated HSPB1, allowing F-actin polymerization. Hence enhances the velocity of cell migration and stimulates directed cell migration by PTEN-modulated polarization. The sequence is that of Insulin-like growth factor 2 mRNA-binding protein 1 (IGF2BP1) from Gallus gallus (Chicken).